We begin with the raw amino-acid sequence, 252 residues long: Major prion protein (252 aa).

The first 22 residues, 1-22, serve as a signal peptide directing secretion; the sequence is MANLGCWMLVLFVATWSDLGLC. The segment at 23-38 is interaction with ADGRG6; that stretch reads KKRPKPGGWNTGGSRY. Positions 23 to 229 are interaction with GRB2, ERI3 and SYN1; it reads KKRPKPGGWN…ESQAYYQRGS (207 aa). Residues 26 to 106 are disordered; that stretch reads PKPGGWNTGG…QWNKPSKPKT (81 aa). 5 tandem repeats follow at residues 51–58, 59–66, 67–74, 75–82, and 83–90. A 5 X 8 AA tandem repeats of P-H-G-G-G-W-G-Q region spans residues 51–90; sequence PQGGGWGQPHGGGWGQPHGGGWGQPHGGSWGQPHGGGWGQ. The span at 52 to 94 shows a compositional bias: gly residues; it reads QGGGWGQPHGGGWGQPHGGGWGQPHGGSWGQPHGGGWGQGGGT. The Cu(2+) site is built by His-60, Gly-61, Gly-62, His-68, Gly-69, Gly-70, His-76, Gly-77, Gly-78, His-84, Gly-85, and Gly-86. A disulfide bond links Cys-178 and Cys-213. 2 N-linked (GlcNAc...) asparagine glycosylation sites follow: Asn-180 and Asn-196. The GPI-anchor amidated serine moiety is linked to residue Ser-229. Positions 230-252 are cleaved as a propeptide — removed in mature form; the sequence is SMVLFSSPPVILLISFLIFLIVG.

This sequence belongs to the prion family. Monomer and homodimer. Has a tendency to aggregate into amyloid fibrils containing a cross-beta spine, formed by a steric zipper of superposed beta-strands. Soluble oligomers may represent an intermediate stage on the path to fibril formation. Copper binding may promote oligomerization. Interacts with GRB2, APP, ERI3/PRNPIP and SYN1. Mislocalized cytosolically exposed PrP interacts with MGRN1; this interaction alters MGRN1 subcellular location and causes lysosomal enlargement. Interacts with APP. Interacts with KIAA1191. Interacts with ADGRG6.

Its subcellular location is the cell membrane. The protein resides in the golgi apparatus. Its primary physiological function is unclear. May play a role in neuronal development and synaptic plasticity. May be required for neuronal myelin sheath maintenance. May promote myelin homeostasis through acting as an agonist for ADGRG6 receptor. May play a role in iron uptake and iron homeostasis. Soluble oligomers are toxic to cultured neuroblastoma cells and induce apoptosis (in vitro). Association with GPC1 (via its heparan sulfate chains) targets PRNP to lipid rafts. Also provides Cu(2+) or Zn(2+) for the ascorbate-mediated GPC1 deaminase degradation of its heparan sulfate side chains. The protein is Major prion protein (PRNP) of Sapajus apella (Brown-capped capuchin).